The chain runs to 339 residues: D-erythrose-4-phosphate dehydrogenase (339 aa).

Residue 11 to 12 coordinates NAD(+); the sequence is RI. Substrate is bound by residues 153-155, R199, 212-213, and R235; these read SCT and TK. Residue C154 is the Nucleophile of the active site. Residue N317 coordinates NAD(+).

It belongs to the glyceraldehyde-3-phosphate dehydrogenase family. Epd subfamily. As to quaternary structure, homotetramer.

The protein resides in the cytoplasm. It catalyses the reaction D-erythrose 4-phosphate + NAD(+) + H2O = 4-phospho-D-erythronate + NADH + 2 H(+). It functions in the pathway cofactor biosynthesis; pyridoxine 5'-phosphate biosynthesis; pyridoxine 5'-phosphate from D-erythrose 4-phosphate: step 1/5. Functionally, catalyzes the NAD-dependent conversion of D-erythrose 4-phosphate to 4-phosphoerythronate. The protein is D-erythrose-4-phosphate dehydrogenase of Shewanella pealeana (strain ATCC 700345 / ANG-SQ1).